Consider the following 355-residue polypeptide: UDP-N-acetylglucosamine--N-acetylmuramyl-(pentapeptide) pyrophosphoryl-undecaprenol N-acetylglucosamine transferase (355 aa).

Residues 13-15 (TGG), Asn-125, Arg-162, Ser-190, Ile-244, and Gln-289 contribute to the UDP-N-acetyl-alpha-D-glucosamine site.

The protein belongs to the glycosyltransferase 28 family. MurG subfamily.

The protein resides in the cell inner membrane. It catalyses the reaction di-trans,octa-cis-undecaprenyl diphospho-N-acetyl-alpha-D-muramoyl-L-alanyl-D-glutamyl-meso-2,6-diaminopimeloyl-D-alanyl-D-alanine + UDP-N-acetyl-alpha-D-glucosamine = di-trans,octa-cis-undecaprenyl diphospho-[N-acetyl-alpha-D-glucosaminyl-(1-&gt;4)]-N-acetyl-alpha-D-muramoyl-L-alanyl-D-glutamyl-meso-2,6-diaminopimeloyl-D-alanyl-D-alanine + UDP + H(+). It participates in cell wall biogenesis; peptidoglycan biosynthesis. Its function is as follows. Cell wall formation. Catalyzes the transfer of a GlcNAc subunit on undecaprenyl-pyrophosphoryl-MurNAc-pentapeptide (lipid intermediate I) to form undecaprenyl-pyrophosphoryl-MurNAc-(pentapeptide)GlcNAc (lipid intermediate II). This chain is UDP-N-acetylglucosamine--N-acetylmuramyl-(pentapeptide) pyrophosphoryl-undecaprenol N-acetylglucosamine transferase, found in Neisseria meningitidis serogroup A / serotype 4A (strain DSM 15465 / Z2491).